A 192-amino-acid chain; its full sequence is Xanthine phosphoribosyltransferase (192 aa).

Positions 20 and 27 each coordinate xanthine. Residue 128–132 (ANGDA) participates in 5-phospho-alpha-D-ribose 1-diphosphate binding. Position 156 (lysine 156) interacts with xanthine.

The protein belongs to the purine/pyrimidine phosphoribosyltransferase family. Xpt subfamily. As to quaternary structure, homodimer.

The protein localises to the cytoplasm. The enzyme catalyses XMP + diphosphate = xanthine + 5-phospho-alpha-D-ribose 1-diphosphate. It functions in the pathway purine metabolism; XMP biosynthesis via salvage pathway; XMP from xanthine: step 1/1. In terms of biological role, converts the preformed base xanthine, a product of nucleic acid breakdown, to xanthosine 5'-monophosphate (XMP), so it can be reused for RNA or DNA synthesis. This Staphylococcus aureus (strain JH1) protein is Xanthine phosphoribosyltransferase.